A 1196-amino-acid polypeptide reads, in one-letter code: DNA polymerase beta (1196 aa).

It belongs to the DNA polymerase type-B family.

It carries out the reaction DNA(n) + a 2'-deoxyribonucleoside 5'-triphosphate = DNA(n+1) + diphosphate. In terms of biological role, DNA-directed DNA polymerase involved in viral DNA replication. This is DNA polymerase beta from African swine fever virus (isolate Pig/Kenya/KEN-50/1950) (ASFV).